Here is a 114-residue protein sequence, read N- to C-terminus: Large ribosomal subunit protein uL22 (114 aa).

The protein belongs to the universal ribosomal protein uL22 family. In terms of assembly, part of the 50S ribosomal subunit.

Its function is as follows. This protein binds specifically to 23S rRNA; its binding is stimulated by other ribosomal proteins, e.g. L4, L17, and L20. It is important during the early stages of 50S assembly. It makes multiple contacts with different domains of the 23S rRNA in the assembled 50S subunit and ribosome. The globular domain of the protein is located near the polypeptide exit tunnel on the outside of the subunit, while an extended beta-hairpin is found that lines the wall of the exit tunnel in the center of the 70S ribosome. In Aeromonas salmonicida (strain A449), this protein is Large ribosomal subunit protein uL22.